The chain runs to 332 residues: MVMVRDIFHEPVLVNEVVAFLVRKPGIYVDGTLGGGGHSSAMLRALFDAGFLAGSLLIGIDQDDAALRVAGETLKEFAASTVLVKGNFCDMGGLIASICAEKGLEPKVMGILLDLGVSSFQINTPDRGFSYLREGPLDMRMDSNASRSAADIVNGYDEQELARLFYRYGEEPRSRSIARAIVAYRQKHGAVTYTQELAAIIRGNAHGGEKVIKTLSRVFQALRIEVNAELDVLRQALYDGIDCLDETGRMAIISYHSLEDRIVKRVFAEKARSDWGPKGVGLREPLSWGSVAPVTRKPLIAAPDEIALNSRARSAKLRVIEKIHEGGRRASE.

Residues 36–38 (GGH), D61, F88, D114, and Q121 each bind S-adenosyl-L-methionine.

This sequence belongs to the methyltransferase superfamily. RsmH family.

The protein localises to the cytoplasm. It catalyses the reaction cytidine(1402) in 16S rRNA + S-adenosyl-L-methionine = N(4)-methylcytidine(1402) in 16S rRNA + S-adenosyl-L-homocysteine + H(+). Specifically methylates the N4 position of cytidine in position 1402 (C1402) of 16S rRNA. The chain is Ribosomal RNA small subunit methyltransferase H from Pelodictyon phaeoclathratiforme (strain DSM 5477 / BU-1).